A 228-amino-acid polypeptide reads, in one-letter code: Chromatin remodeling protein SHL (228 aa).

Residues 21–137 (KSIQEGDAVL…STTGAFDPDR (117 aa)) form the BAH domain. The PHD-type zinc-finger motif lies at 139–190 (TVFCKCEMPYNPDDLMVQCEECSEWFHPSCIGTTIEEAKKPDNFYCEECSPQ). Polar residues predominate over residues 191-203 (QQNLHNSNSTSNN). The tract at residues 191-228 (QQNLHNSNSTSNNRDAKVNGKRSLEVTKSKNKHTKRPG) is disordered. Residues 204 to 218 (RDAKVNGKRSLEVTK) show a composition bias toward basic and acidic residues. The Nuclear localization signal motif lies at 210–217 (GKRSLEVT). Residues 219–228 (SKNKHTKRPG) are compositionally biased toward basic residues.

This sequence belongs to the SHL1/EBS protein family. In terms of assembly, recognizes di- and trimethylated histone H3 at lysine 4. Interacts with HDA6. Interacts with DEK3. As to expression, expressed ubiquitously. Mostly expressed in roots, stems, leaves and flowers, and, to a lower extent, in siliques.

The protein localises to the nucleus. Functionally, chromatin remodeling factor that binds to methylated histone (e.g. H3K4me2/3) to prevent their acetylation (e.g. H3K9K14Ac), likely by recruiting histone deacetylase (HDAC) complexes, and thus regulate the transcription of target genes. Required during development and for fertility, probably by modulating developmental gene expression. Promotes development speed, but at fitness cost. Involved in the chromatin-mediated repression of floral initiation and controls genes regulating flowering. Negatively regulates the expression of the floral integrator SOC1, by preventing high levels of H3 acetylation, thus maintaining an inactive chromatin conformation. The polypeptide is Chromatin remodeling protein SHL (Arabidopsis thaliana (Mouse-ear cress)).